The following is a 1075-amino-acid chain: Atos homolog protein A (1075 aa).

Residues 24–32 (ALLITEGRT) are transactivation domain 1 (TAD1). 3 disordered regions span residues 430 to 469 (FGSPEFGSPGDSREGKVREKSETRPGETCTSHSLYPRQPA), 570 to 592 (YSPQEKPLKPEVRTQHQNHPDSI), and 703 to 766 (LNKN…PHSV). Residues 440–454 (DSREGKVREKSETRP) are compositionally biased toward basic and acidic residues. Residues 703–712 (LNKNKTNCSS) show a composition bias toward polar residues. Over residues 746–759 (DRLKTEQEAKRDSG) the composition is skewed to basic and acidic residues. Residues 878 to 935 (LLGNFEESVLNYRLDPLGIVDGFTAEVGASGTFCPTHLTLPVEVSFYSVSDDNAPSPY) form a required for macropage invasion region. Residues 962 to 970 (FNPNKTVVK) are transactivation domain 2 (TAD2).

It belongs to the ATOS family.

The protein localises to the nucleus. Its function is as follows. Transcription regulator that syncronizes transcriptional and translational programs to promote macrophage invasion of tissues. The chain is Atos homolog protein A (Atosa) from Mus musculus (Mouse).